The primary structure comprises 243 residues: 7-cyano-7-deazaguanine synthase (243 aa).

Residue 18 to 28 (FSGGQDSATCL) participates in ATP binding. Zn(2+) is bound by residues C206, C221, C224, and C227.

The protein belongs to the QueC family. The cofactor is Zn(2+).

The enzyme catalyses 7-carboxy-7-deazaguanine + NH4(+) + ATP = 7-cyano-7-deazaguanine + ADP + phosphate + H2O + H(+). The protein operates within purine metabolism; 7-cyano-7-deazaguanine biosynthesis. Catalyzes the ATP-dependent conversion of 7-carboxy-7-deazaguanine (CDG) to 7-cyano-7-deazaguanine (preQ(0)). This chain is 7-cyano-7-deazaguanine synthase, found in Methylorubrum extorquens (strain CM4 / NCIMB 13688) (Methylobacterium extorquens).